The sequence spans 257 residues: Phosphonates import ATP-binding protein PhnC (257 aa).

Residues 4–248 (IKFKNVSKVY…VFSKIYGRTI (245 aa)) form the ABC transporter domain. ATP is bound at residue 37 to 44 (GLSGAGKS).

It belongs to the ABC transporter superfamily. Phosphonates importer (TC 3.A.1.9.1) family. The complex is composed of two ATP-binding proteins (PhnC), two transmembrane proteins (PhnE) and a solute-binding protein (PhnD).

It localises to the cell membrane. It catalyses the reaction phosphonate(out) + ATP + H2O = phosphonate(in) + ADP + phosphate + H(+). In terms of biological role, part of the ABC transporter complex PhnCDE involved in phosphonates import. Responsible for energy coupling to the transport system. The sequence is that of Phosphonates import ATP-binding protein PhnC from Staphylococcus aureus (strain MRSA252).